Consider the following 433-residue polypeptide: Xylose isomerase (433 aa).

Catalysis depends on residues His97 and Asp100. Mg(2+)-binding residues include Glu228, Glu264, His267, Asp292, Asp303, Asp305, and Asp334.

It belongs to the xylose isomerase family. Homotetramer. Mg(2+) serves as cofactor.

It is found in the cytoplasm. The enzyme catalyses alpha-D-xylose = alpha-D-xylulofuranose. The polypeptide is Xylose isomerase (Fervidobacterium gondwanense).